The sequence spans 318 residues: Acetyl-coenzyme A carboxylase carboxyl transferase subunit alpha (318 aa).

The CoA carboxyltransferase C-terminal domain occupies 39 to 297 (RLEKRSQTAL…SEALKAMVGK (259 aa)).

This sequence belongs to the AccA family. Acetyl-CoA carboxylase is a heterohexamer composed of biotin carboxyl carrier protein (AccB), biotin carboxylase (AccC) and two subunits each of ACCase subunit alpha (AccA) and ACCase subunit beta (AccD).

It localises to the cytoplasm. The catalysed reaction is N(6)-carboxybiotinyl-L-lysyl-[protein] + acetyl-CoA = N(6)-biotinyl-L-lysyl-[protein] + malonyl-CoA. It functions in the pathway lipid metabolism; malonyl-CoA biosynthesis; malonyl-CoA from acetyl-CoA: step 1/1. Component of the acetyl coenzyme A carboxylase (ACC) complex. First, biotin carboxylase catalyzes the carboxylation of biotin on its carrier protein (BCCP) and then the CO(2) group is transferred by the carboxyltransferase to acetyl-CoA to form malonyl-CoA. This chain is Acetyl-coenzyme A carboxylase carboxyl transferase subunit alpha, found in Bartonella tribocorum (strain CIP 105476 / IBS 506).